The sequence spans 280 residues: F-box only protein 27 (280 aa).

Residues 20–67 (VLDLSRLPPELLLLVLSHVPPRTLLMHCRRVCRAWRALVDGQALWLLL) form the F-box domain. Positions 101–277 (FCALRPLGRN…VTNSSVIIRV (177 aa)) constitute an FBA domain.

In terms of assembly, part of a SCF (SKP1-cullin-F-box) protein ligase complex. Interacts with SKP1 and CUL1. As to expression, detected in brain, heart and muscle.

Functionally, substrate-recognition component of the SCF (SKP1-CUL1-F-box protein)-type E3 ubiquitin ligase complex. Able to recognize and bind complex-type oligosaccharides. The sequence is that of F-box only protein 27 (Fbxo27) from Mus musculus (Mouse).